The chain runs to 873 residues: DNA mismatch repair protein MutS (873 aa).

ATP is bound at residue 620 to 627; the sequence is GPNMAGKS.

The protein belongs to the DNA mismatch repair MutS family.

Functionally, this protein is involved in the repair of mismatches in DNA. It is possible that it carries out the mismatch recognition step. This protein has a weak ATPase activity. The chain is DNA mismatch repair protein MutS from Ruminiclostridium cellulolyticum (strain ATCC 35319 / DSM 5812 / JCM 6584 / H10) (Clostridium cellulolyticum).